A 610-amino-acid chain; its full sequence is UvrABC system protein C (610 aa).

Residues 16 to 94 (SQPGVYRMYD…IKLYQPRYNV (79 aa)) enclose the GIY-YIG domain. One can recognise a UVR domain in the interval 204–239 (QQVLTQLISRMEEASRLLHFEDAARIRDQIQAVRRV).

Belongs to the UvrC family. As to quaternary structure, interacts with UvrB in an incision complex.

Its subcellular location is the cytoplasm. The UvrABC repair system catalyzes the recognition and processing of DNA lesions. UvrC both incises the 5' and 3' sides of the lesion. The N-terminal half is responsible for the 3' incision and the C-terminal half is responsible for the 5' incision. The protein is UvrABC system protein C of Yersinia enterocolitica serotype O:8 / biotype 1B (strain NCTC 13174 / 8081).